Here is a 342-residue protein sequence, read N- to C-terminus: Dihydroorotase (342 aa).

Residues His-13 and His-15 each contribute to the Zn(2+) site. Residues 15-17 (HLR) and Asn-41 each bind substrate. 3 residues coordinate Zn(2+): Lys-98, His-135, and His-173. Lys-98 carries the N6-carboxylysine modification. A substrate-binding site is contributed by His-135. Leu-218 lines the substrate pocket. Zn(2+) is bound at residue Asp-246. The active site involves Asp-246. Substrate is bound by residues His-250 and Ala-262.

This sequence belongs to the metallo-dependent hydrolases superfamily. DHOase family. Class II DHOase subfamily. As to quaternary structure, homodimer. The cofactor is Zn(2+).

It catalyses the reaction (S)-dihydroorotate + H2O = N-carbamoyl-L-aspartate + H(+). The protein operates within pyrimidine metabolism; UMP biosynthesis via de novo pathway; (S)-dihydroorotate from bicarbonate: step 3/3. Functionally, catalyzes the reversible cyclization of carbamoyl aspartate to dihydroorotate. This chain is Dihydroorotase, found in Vibrio vulnificus (strain CMCP6).